Consider the following 124-residue polypeptide: Small ribosomal subunit protein bS6 (124 aa).

The protein belongs to the bacterial ribosomal protein bS6 family.

Functionally, binds together with bS18 to 16S ribosomal RNA. The sequence is that of Small ribosomal subunit protein bS6 from Actinobacillus pleuropneumoniae serotype 7 (strain AP76).